We begin with the raw amino-acid sequence, 179 residues long: Large ribosomal subunit protein uL5 (179 aa).

This sequence belongs to the universal ribosomal protein uL5 family. Part of the 50S ribosomal subunit; part of the 5S rRNA/L5/L18/L25 subcomplex. Contacts the 5S rRNA and the P site tRNA. Forms a bridge to the 30S subunit in the 70S ribosome.

In terms of biological role, this is one of the proteins that bind and probably mediate the attachment of the 5S RNA into the large ribosomal subunit, where it forms part of the central protuberance. In the 70S ribosome it contacts protein S13 of the 30S subunit (bridge B1b), connecting the 2 subunits; this bridge is implicated in subunit movement. Contacts the P site tRNA; the 5S rRNA and some of its associated proteins might help stabilize positioning of ribosome-bound tRNAs. In Klebsiella pneumoniae (strain 342), this protein is Large ribosomal subunit protein uL5.